The sequence spans 218 residues: MSSGAASGTGRGRPRGGGPGPRDPPPGETHKLVVVGGGGVGKSALTIQFIQSYFVSDYDPTIEDSYTKICTVDGIPARLDILDTAGQEEFGAMREQYMRAGNGFLLVFAINDRQSFNEVGKLFTQILRVKDRDDFPIVLVGNKADLENQRQVLRSEASSFSASHHMTYFEASAKLRLNVDEAFEQLVRAVRKYQEQELPPSPPSAPRKKDGGCPCVLL.

The disordered stretch occupies residues 1-30 (MSSGAASGTGRGRPRGGGPGPRDPPPGETH). Positions 7–20 (SGTGRGRPRGGGPG) are enriched in gly residues. A GTP-binding site is contributed by 36–44 (GGGGVGKSA). Residues 58–66 (YDPTIEDSY) carry the Effector region motif. GTP-binding positions include 83 to 87 (DTAGQ), 142 to 145 (NKAD), and 172 to 174 (SAK). Cys215 is modified (cysteine methyl ester). Residue Cys215 is the site of S-geranylgeranyl cysteine attachment. Positions 216–218 (VLL) are cleaved as a propeptide — removed in mature form.

Belongs to the small GTPase superfamily. Ras family. In terms of assembly, interacts with PLCE1. Interacts (active GTP-bound form preferentially) with RGS14. Interacts with OSBPL3. Interacts with ZDHHC19. S-palmitoylated by ZDHHC19, leading to increased association with membranes and with rafts/caveolae as well as enhanced cell viability.

It localises to the cell membrane. The enzyme catalyses GTP + H2O = GDP + phosphate + H(+). Functionally, GTP-binding protein with GTPase activity, likely involved in the regulation of MAPK signaling pathway and thereby controlling multiple cellular processes. Regulates the organization of the actin cytoskeleton. With OSPBL3, modulates integrin beta-1 (ITGB1) activity. This chain is Ras-related protein R-Ras (Rras), found in Mus musculus (Mouse).